Reading from the N-terminus, the 702-residue chain is Methionine--tRNA ligase (702 aa).

The short motif at 14-24 is the 'HIGH' region element; it reads PYANGPVHLGH. Zn(2+)-binding residues include C146, C149, C159, and C162. The short motif at 344-348 is the 'KMSKS' region element; that stretch reads KFSKS. ATP is bound at residue K347. The 102-residue stretch at 601 to 702 folds into the tRNA-binding domain; that stretch reads EFLKVDLRVA…GKEINGKKIQ (102 aa).

This sequence belongs to the class-I aminoacyl-tRNA synthetase family. MetG type 1 subfamily. Homodimer. The cofactor is Zn(2+).

The protein resides in the cytoplasm. It carries out the reaction tRNA(Met) + L-methionine + ATP = L-methionyl-tRNA(Met) + AMP + diphosphate. Is required not only for elongation of protein synthesis but also for the initiation of all mRNA translation through initiator tRNA(fMet) aminoacylation. The chain is Methionine--tRNA ligase from Chlorobium phaeobacteroides (strain DSM 266 / SMG 266 / 2430).